The primary structure comprises 541 residues: Phosphoenolpyruvate carboxykinase (ATP) (541 aa).

Positions 64, 206, and 212 each coordinate substrate. Residues Lys-212, His-231, and 247 to 255 (GLSGTGKTT) contribute to the ATP site. Lys-212 and His-231 together coordinate Mn(2+). Asp-268 lines the Mn(2+) pocket. Positions 296, 332, and 454 each coordinate ATP. Arg-332 serves as a coordination point for substrate.

It belongs to the phosphoenolpyruvate carboxykinase (ATP) family. As to quaternary structure, monomer. Mn(2+) serves as cofactor.

The protein resides in the cytoplasm. The catalysed reaction is oxaloacetate + ATP = phosphoenolpyruvate + ADP + CO2. It functions in the pathway carbohydrate biosynthesis; gluconeogenesis. Its function is as follows. Involved in the gluconeogenesis. Catalyzes the conversion of oxaloacetate (OAA) to phosphoenolpyruvate (PEP) through direct phosphoryl transfer between the nucleoside triphosphate and OAA. The chain is Phosphoenolpyruvate carboxykinase (ATP) from Wigglesworthia glossinidia brevipalpis.